Consider the following 78-residue polypeptide: Small ribosomal subunit protein bS18 (78 aa).

It belongs to the bacterial ribosomal protein bS18 family. As to quaternary structure, part of the 30S ribosomal subunit. Forms a tight heterodimer with protein bS6.

Functionally, binds as a heterodimer with protein bS6 to the central domain of the 16S rRNA, where it helps stabilize the platform of the 30S subunit. The polypeptide is Small ribosomal subunit protein bS18 (Lacticaseibacillus casei (strain BL23) (Lactobacillus casei)).